Here is a 100-residue protein sequence, read N- to C-terminus: Large ribosomal subunit protein uL23 (100 aa).

The protein belongs to the universal ribosomal protein uL23 family. As to quaternary structure, part of the 50S ribosomal subunit. Contacts protein L29, and trigger factor when it is bound to the ribosome.

One of the early assembly proteins it binds 23S rRNA. One of the proteins that surrounds the polypeptide exit tunnel on the outside of the ribosome. Forms the main docking site for trigger factor binding to the ribosome. The chain is Large ribosomal subunit protein uL23 from Yersinia enterocolitica serotype O:8 / biotype 1B (strain NCTC 13174 / 8081).